Reading from the N-terminus, the 358-residue chain is MAPQNLGTLCLLLLYLLGAAIAGRDFYKILGVPRSASIKDIKKAYRKLALQLHPDRNPDDPRAQEKFQDLGAAYEVLSDSEKRKQYDTYGEEGLKDGHQSSHGDIFSHFFGDFGFMFGGTPRQQDRNIPRGSDIIVDLEVTLEEVYAGNFVEVVRNKPVARQAPGKRKCNCRQEMRTTQLGPGRFQMTQEVVCDECPNVKLVNEERTLEVEIEPGVRDGMEYPFIGEGEPHVDGEPGDLRFRIKVVKHPIFERRGDDLYTNVTISLVESLVGFDMDITHLDGHKVHISRDKITRPGAKLWKKGEGLPNFDNNNIKGSLIITFDVDFPKEQLTEEAREGIKQLLNQGSVQKVYNGLQGY.

The N-terminal stretch at 1–22 (MAPQNLGTLCLLLLYLLGAAIA) is a signal peptide. The J domain maps to 25–90 (DFYKILGVPR…EKRKQYDTYG (66 aa)). A Phosphothreonine modification is found at Thr188. Asn261 carries an N-linked (GlcNAc...) asparagine glycan.

Part of a large chaperone multiprotein complex comprising DNAJB11, HSP90B1, HSPA5, HYOU, PDIA2, PDIA4, PDIA6, PPIB, SDF2L1, UGGT1 and very small amounts of ERP29, but not, or at very low levels, CALR nor CANX. Binds to denatured substrates in an ATP-independent manner. Interacts via the J domain with HSPA5 in an ATP-dependent manner. Post-translationally, contains high-mannose Endo H-sensitive carbohydrates. In terms of processing, cys-169, Cys-171, Cys-193 and Cys-196 form intramolecular disulfide bonds. The preferential partner for each Cys is not known. Pancreas.

The protein resides in the endoplasmic reticulum lumen. Its function is as follows. As a co-chaperone for HSPA5 it is required for proper folding, trafficking or degradation of proteins. Binds directly to both unfolded proteins that are substrates for ERAD and nascent unfolded peptide chains, but dissociates from the HSPA5-unfolded protein complex before folding is completed. May help recruiting HSPA5 and other chaperones to the substrate. Stimulates HSPA5 ATPase activity. It is necessary for maturation and correct trafficking of PKD1. This Canis lupus familiaris (Dog) protein is DnaJ homolog subfamily B member 11 (DNAJB11).